Consider the following 134-residue polypeptide: MAKAPNNAAAARVRKKVKKNVAEGIAHVHASFNNTIITITDRQGNALSWATSGGAGFKGSRKSTPFAAQVAAEAAGKVAIECGIKNLEVRIKGPGPGRESAVRALNNLGIKITQIQDVTPVPHNGCRPPKRRRI.

The protein belongs to the universal ribosomal protein uS11 family. In terms of assembly, part of the 30S ribosomal subunit. Interacts with proteins S7 and S18. Binds to IF-3.

Functionally, located on the platform of the 30S subunit, it bridges several disparate RNA helices of the 16S rRNA. Forms part of the Shine-Dalgarno cleft in the 70S ribosome. The sequence is that of Small ribosomal subunit protein uS11 from Janthinobacterium sp. (strain Marseille) (Minibacterium massiliensis).